The following is a 235-amino-acid chain: Uridylate kinase (235 aa).

9–12 (KISG) contributes to the ATP binding site. Glycine 50 lines the UMP pocket. Glycine 51 and arginine 55 together coordinate ATP. UMP is bound by residues aspartate 70 and 131–138 (TGFPYFTT). Asparagine 159, tyrosine 165, and aspartate 168 together coordinate ATP.

This sequence belongs to the UMP kinase family. Homohexamer; trimer of dimers.

The protein resides in the cytoplasm. The catalysed reaction is UMP + ATP = UDP + ADP. The protein operates within pyrimidine metabolism; CTP biosynthesis via de novo pathway; UDP from UMP (UMPK route): step 1/1. Unlike other bacteria, is not activated by GTP. UTP is a competitive inhibitor against UMP and a non-competitive inhibitor toward ATP. In terms of biological role, catalyzes the reversible phosphorylation of UMP to UDP, with ATP as the most efficient phosphate donor. Is also able to phosphorylate dUMP. The sequence is that of Uridylate kinase (pyrH) from Ureaplasma parvum serovar 3 (strain ATCC 700970).